Here is a 408-residue protein sequence, read N- to C-terminus: UDP-N-acetylglucosamine--dolichyl-phosphate N-acetylglucosaminephosphotransferase (408 aa).

At 1-10 (MWAFPELPLP) the chain is on the lumenal side. Residues 11–38 (LLVNLFGSLLGFVATVTLIPAFRSHFIA) traverse the membrane as a helical segment. The Cytoplasmic portion of the chain corresponds to 39–58 (ARLCGQDLNKLSRQQIPESQ). Residues 44-46 (QDL) and Glu-56 contribute to the UDP-N-acetyl-alpha-D-glucosamine site. Residues 59–78 (GVICGAVFLIILFCFIPFPF) form a helical membrane-spanning segment. Topologically, residues 79–91 (LNCFVEEQCKAFP) are lumenal. Residues 92 to 118 (HHEFVALIGALLAICCMIFLGFADDVL) form a helical membrane-spanning segment. At 119–121 (NLP) the chain is on the cytoplasmic side. The chain crosses the membrane as a helical span at residues 122-143 (WRHKLLLPTAASLPLLMVYFTN). Dolichyl phosphate is bound at residue Lys-125. The Lumenal segment spans residues 144–166 (FGNTTIVVPKPFRWILGLHLDLG). Asn-146 is a glycosylation site (N-linked (GlcNAc...) asparagine). Residues 167–186 (ILYYVYMGLLAVFCTNAINI) traverse the membrane as a helical segment. 178–186 (VFCTNAINI) is a binding site for dolichyl phosphate. Asn-185 serves as a coordination point for Mg(2+). The Cytoplasmic segment spans residues 187–192 (LAGING). Asn-191 is a binding site for UDP-N-acetyl-alpha-D-glucosamine. A helical transmembrane segment spans residues 193–213 (LEAGQSLVISASIIVFNLVEL). The Lumenal segment spans residues 214-218 (EGDYR). A helical transmembrane segment spans residues 219-242 (DDHVFSLYFMIPFFFTTLGLLYHN). Residues 243 to 250 (WYPSQVFV) lie on the Cytoplasmic side of the membrane. A helical membrane pass occupies residues 251–269 (GDTFCYFAGMTFAVVGILG). A Mg(2+)-binding site is contributed by Asp-252. Over 270-271 (HF) the chain is Lumenal. A helical membrane pass occupies residues 272–293 (SKTMLLFFIPQVFNFLYSLPQL). The Cytoplasmic segment spans residues 294 to 375 (LHAIPCPRHR…LLLKIFGPIH (82 aa)). Position 301 to 303 (301 to 303 (RHR)) interacts with UDP-N-acetyl-alpha-D-glucosamine. A helical transmembrane segment spans residues 376 to 400 (ERNLTLLLLLLQILSSAVTFSIRYQ). Residues 401–408 (LVRLFYDV) lie on the Lumenal side of the membrane.

It belongs to the glycosyltransferase 4 family. Homodimer. Requires Mg(2+) as cofactor.

It is found in the endoplasmic reticulum membrane. The catalysed reaction is a di-trans,poly-cis-dolichyl phosphate + UDP-N-acetyl-alpha-D-glucosamine = an N-acetyl-alpha-D-glucosaminyl-diphospho-di-trans,poly-cis-dolichol + UMP. The protein operates within protein modification; protein glycosylation. Its activity is regulated as follows. Inhibited by natural nucleoside antibiotic tunicamycin, which acts as a structural analog and competitor of UDP-GlcNAc. Its function is as follows. UDP-N-acetylglucosamine--dolichyl-phosphate N-acetylglucosaminephosphotransferase that operates in the biosynthetic pathway of dolichol-linked oligosaccharides, the glycan precursors employed in protein asparagine (N)-glycosylation. The assembly of dolichol-linked oligosaccharides begins on the cytosolic side of the endoplasmic reticulum membrane and finishes in its lumen. The sequential addition of sugars to dolichol pyrophosphate produces dolichol-linked oligosaccharides containing fourteen sugars, including two GlcNAcs, nine mannoses and three glucoses. Once assembled, the oligosaccharide is transferred from the lipid to nascent proteins by oligosaccharyltransferases. Catalyzes the initial step of dolichol-linked oligosaccharide biosynthesis, transfering GlcNAc-1-P from cytosolic UDP-GlcNAc onto the carrier lipid dolichyl phosphate (P-dolichol), yielding GlcNAc-P-P-dolichol embedded in the cytoplasmic leaflet of the endoplasmic reticulum membrane. The chain is UDP-N-acetylglucosamine--dolichyl-phosphate N-acetylglucosaminephosphotransferase (DPAGT1) from Cricetulus longicaudatus (Long-tailed dwarf hamster).